A 136-amino-acid chain; its full sequence is Putative pre-16S rRNA nuclease (136 aa).

It belongs to the YqgF nuclease family.

It is found in the cytoplasm. Its function is as follows. Could be a nuclease involved in processing of the 5'-end of pre-16S rRNA. This is Putative pre-16S rRNA nuclease from Francisella tularensis subsp. mediasiatica (strain FSC147).